A 580-amino-acid chain; its full sequence is NADH-quinone oxidoreductase subunit C/D (580 aa).

Residues 1-171 (MSFDQVIADA…PPFVLTDRLF (171 aa)) form an NADH dehydrogenase I subunit C region. The segment at 195–580 (ELMVLNFGPH…IDFVMSDVDR (386 aa)) is NADH dehydrogenase I subunit D.

This sequence in the N-terminal section; belongs to the complex I 30 kDa subunit family. The protein in the C-terminal section; belongs to the complex I 49 kDa subunit family. In terms of assembly, NDH-1 is composed of 13 different subunits. Subunits NuoB, CD, E, F, and G constitute the peripheral sector of the complex.

It is found in the cell inner membrane. It catalyses the reaction a quinone + NADH + 5 H(+)(in) = a quinol + NAD(+) + 4 H(+)(out). In terms of biological role, NDH-1 shuttles electrons from NADH, via FMN and iron-sulfur (Fe-S) centers, to quinones in the respiratory chain. The immediate electron acceptor for the enzyme in this species is believed to be ubiquinone. Couples the redox reaction to proton translocation (for every two electrons transferred, four hydrogen ions are translocated across the cytoplasmic membrane), and thus conserves the redox energy in a proton gradient. This Cereibacter sphaeroides (strain ATCC 17025 / ATH 2.4.3) (Rhodobacter sphaeroides) protein is NADH-quinone oxidoreductase subunit C/D.